The chain runs to 641 residues: 1-deoxy-D-xylulose-5-phosphate synthase (641 aa).

Thiamine diphosphate is bound by residues His79 and Gly120–Ser122. Asp151 contacts Mg(2+). Thiamine diphosphate is bound by residues Gly152 to Ser153, Asn180, Tyr291, and Glu375. A Mg(2+)-binding site is contributed by Asn180.

The protein belongs to the transketolase family. DXPS subfamily. In terms of assembly, homodimer. The cofactor is Mg(2+). Requires thiamine diphosphate as cofactor.

It catalyses the reaction D-glyceraldehyde 3-phosphate + pyruvate + H(+) = 1-deoxy-D-xylulose 5-phosphate + CO2. It functions in the pathway metabolic intermediate biosynthesis; 1-deoxy-D-xylulose 5-phosphate biosynthesis; 1-deoxy-D-xylulose 5-phosphate from D-glyceraldehyde 3-phosphate and pyruvate: step 1/1. Its function is as follows. Catalyzes the acyloin condensation reaction between C atoms 2 and 3 of pyruvate and glyceraldehyde 3-phosphate to yield 1-deoxy-D-xylulose-5-phosphate (DXP). In Nitratidesulfovibrio vulgaris (strain ATCC 29579 / DSM 644 / CCUG 34227 / NCIMB 8303 / VKM B-1760 / Hildenborough) (Desulfovibrio vulgaris), this protein is 1-deoxy-D-xylulose-5-phosphate synthase.